Here is a 325-residue protein sequence, read N- to C-terminus: UPF0285 protein MmarC7_1666 (325 aa).

Belongs to the UPF0285 family.

The protein is UPF0285 protein MmarC7_1666 of Methanococcus maripaludis (strain C7 / ATCC BAA-1331).